The following is a 163-amino-acid chain: Peptide deformylase 3 (163 aa).

Residues Cys-91 and His-133 each contribute to the Fe cation site. Glu-134 is a catalytic residue. His-137 is a binding site for Fe cation.

The protein belongs to the polypeptide deformylase family. Requires Fe(2+) as cofactor.

The catalysed reaction is N-terminal N-formyl-L-methionyl-[peptide] + H2O = N-terminal L-methionyl-[peptide] + formate. In terms of biological role, removes the formyl group from the N-terminal Met of newly synthesized proteins. Requires at least a dipeptide for an efficient rate of reaction. N-terminal L-methionine is a prerequisite for activity but the enzyme has broad specificity at other positions. This is Peptide deformylase 3 from Shewanella oneidensis (strain ATCC 700550 / JCM 31522 / CIP 106686 / LMG 19005 / NCIMB 14063 / MR-1).